Here is a 275-residue protein sequence, read N- to C-terminus: Putative replication protein (275 aa).

The BRCT domain occupies 98 to 198; it reads SKAICFTPYD…RILKISEDYF (101 aa).

The protein is Putative replication protein of Wigglesworthia glossinidia brevipalpis.